Here is a 71-residue protein sequence, read N- to C-terminus: Exodeoxyribonuclease 7 small subunit (71 aa).

Belongs to the XseB family. Heterooligomer composed of large and small subunits.

The protein resides in the cytoplasm. It catalyses the reaction Exonucleolytic cleavage in either 5'- to 3'- or 3'- to 5'-direction to yield nucleoside 5'-phosphates.. Bidirectionally degrades single-stranded DNA into large acid-insoluble oligonucleotides, which are then degraded further into small acid-soluble oligonucleotides. The polypeptide is Exodeoxyribonuclease 7 small subunit (Streptococcus agalactiae serotype Ia (strain ATCC 27591 / A909 / CDC SS700)).